We begin with the raw amino-acid sequence, 417 residues long: Serine hydroxymethyltransferase (417 aa).

(6S)-5,6,7,8-tetrahydrofolate-binding positions include Leu121 and 125–127; that span reads GHL. Lys229 carries the post-translational modification N6-(pyridoxal phosphate)lysine. 355 to 357 lines the (6S)-5,6,7,8-tetrahydrofolate pocket; sequence SPF.

This sequence belongs to the SHMT family. As to quaternary structure, homodimer. Pyridoxal 5'-phosphate is required as a cofactor.

Its subcellular location is the cytoplasm. It catalyses the reaction (6R)-5,10-methylene-5,6,7,8-tetrahydrofolate + glycine + H2O = (6S)-5,6,7,8-tetrahydrofolate + L-serine. The protein operates within one-carbon metabolism; tetrahydrofolate interconversion. Its pathway is amino-acid biosynthesis; glycine biosynthesis; glycine from L-serine: step 1/1. Its function is as follows. Catalyzes the reversible interconversion of serine and glycine with tetrahydrofolate (THF) serving as the one-carbon carrier. This reaction serves as the major source of one-carbon groups required for the biosynthesis of purines, thymidylate, methionine, and other important biomolecules. Also exhibits THF-independent aldolase activity toward beta-hydroxyamino acids, producing glycine and aldehydes, via a retro-aldol mechanism. The chain is Serine hydroxymethyltransferase from Xanthomonas axonopodis pv. citri (strain 306).